Consider the following 2409-residue polypeptide: MTLSNGSNGANGTSNGHGAHPSANGFHNAANGGANNGTPNGGAEYNASLPQVDGDISSAIAVIGVSGRFPGDATSPRHLWDLLKEGRNALSDVPESRFNIDGFYHPDGGRAGTLNTKQGYFLKSDVDKFDAGFFSITPEEARGMDPTQRILLELAYEGLENAGLKIDEVANQHMSCYIGACQHDYWDLQAYDMDSAPKYTATGTGPALLSNRISWFFNLKGPSVTIDTACSSTLTALHLAGQSIRNGESDSALVGGLGLHLLPNFGVFMSSMSFLSADNKCHSFDASANGYARAEGGGFVVLKRLDKALADGDTIRAVLRSTGSNQDGRTLGITQPSASRQEELIRATYASAGLTFDKTNFFEAHGTGTKVGDPIECSVIGNVFGKTRERPVYVGSVKSNIGHLEGASGLAGLVKTIYSLESGVISPTYGLENVNPKIKLDEWKINLPTEKIKWPAGLRRASINSFGYGGANAHAVLDDAYHFLKTHNLEGHHNTKAEDVPATGLIGNGSQDIIEKTDKKPRLFLISSHEESGIARLSQTLQAYLADPAARDLPEDQFLHRLAYTLSEKRSSLPWKTYAAASTIEELQQALDGAPTKAARVPRSQALTFIFTGQGAQWFAMGRELQKYPIFRQSLHACSQYLKDFGSTWDLVEELNRDAKESIIDLPYVSQPSCTALQLSIIDLLASWGIHPQVTVGHSSGEIAAAYAKGAFDKEAAMRIAYFRGHLTGNITKTGSMAAVGLGPERVSEYLSRVTAGKIVVACINSPASVTLSGDVEGIDEVLTFLQADDIFARKLRVTTAYHSHHMQQISEEYLNSLSGKWELKPGNPKVRMFSSVSAKPIDGTELGPAYWVANLVSPVNFSGAVTAAANAGALGKRKASGKKGSADAMVEIGPHAALQGPLKQILDSIGDKGASPKYFSAIKRKQDAIQTTLEVVGELLVLGHQVNVPLVNAYTETTSALVDLPPYAWNTTNSYWHESAAVTAYKQRKHPRLELLGVRDPRSTKAEPAWHNYLRISEQPWIEHHQFQNTNIYPMAGMIVMAIEGLRQVETRTDVEGYTIRDVNIGSALVVPLDQTIETRLQLTPWRSGPNVSWSHWTEFTVSSRNESGSWTTNCTGLVSTSYKRETNSTFLDEEAAANALLSQEYKAISNSDLPSVDPTVFYTKLDESGFSLGPAFRGVKELNLFDHKAHFSMEVIDTKDFYPKKWEPAHLIHPAVLDVFVHLLISSTGDAAEIKARVPVSTASLYISADFDSTSGTKYHGFSTSKKHGATNMLSNVIAFAEGGSKPLIALEGCKTVPLRGASDPSSGDGQSLGHVPVVPKKVVDVDISDAVTLEKLLQGTDFASKLGSYLSLLGQKRPGLSVLEYSSSTSSILLRALTAQAEELQGSITSVALTTPLDGPADEETSVPEAWKNKVQQEKLDLTQDPSTQGFEDVALDVIFIDVEEQGDISLVLKNAKKILKPSGILLITNHASAISTDLLTSTDLTSTTVSELIIARHKPDTDPSDHQVLIVTPPSPSSGLSKLIAQAENDLTSQGYEVNKADFANIPEQTTPFLTLSALDVDTPFLESFHHETFTKLRSLFLASRGTLWLTLDTASRGLVNGLGRTIRAEHPDISFTVLSLDALTSLDSALNTKTISSIIENMSRKTFGETSDSEYVIRNNQVLVERLIPNPDLKALLDSSKTGNNLSAVKVPLKQVNKPLQLSIRDPGLLDTLEYLSVPDLFEPLGDNQIEIEVGSVGLNFRDVMVAMGQMEDNTLGIECAGVVAKVGAGVQKFKVGDRVFGMHAGCFQTRVRVDPRTFQRTPEHLGDEEAASLMCTSATVVHSLIDVARLQRGESVLIHSAAGGVGQAAIRLAKYLGAEIFATVSSEKKKRLLIEDYGVKESHIFNSRDYSFADGILRLTNQRGVDVVINSLAGEALRRTWLCVAPFGRFIELGKRDIYDNSGLDMRPFLDNITFSGLDILTQVISYPDRFEAIGNQVVELLSKNAISPLNNLARYSFGEVSKAFRLMQSGGHVGKIVLYPRPDDIVPIVPEGLESFCLPHDATYVLIGGLGGIGRSVTRLLVERGARHLVFLSRSAAARPEAQALLDELHAQGVQAKAFAVDVAEKSQLEPVINDVKQSFPAIKGLIHCAMDLRDAVYSNMTADDWNASLRPKLLATRNLHDLLPTDLDFFICLSSIAGIIGSRGQANYNAGNTYQDALAHHRAASGLAATSINLSLVVGIGVSTERSEVFQLLKDGGLLGMDENDVLNVIKAAISGCAPTQVALGASTGGQLDKLAANDPYWFADSRFAVLNQLDRQGTGAVAGGQDWKKLLAAAASPDEVYEIVLQQLLEGVSKIIKADVEDMDSRKSLPALGIDSLVAIEIRTWLLKEFQADLSVFDIVSNDPLTGFAKKVMAKSVLIA.

Low complexity predominate over residues 1-43; that stretch reads MTLSNGSNGANGTSNGHGAHPSANGFHNAANGGANNGTPNGGA. The disordered stretch occupies residues 1–49; sequence MTLSNGSNGANGTSNGHGAHPSANGFHNAANGGANNGTPNGGAEYNASL. One can recognise a Ketosynthase family 3 (KS3) domain in the interval 57-479; that stretch reads SSAIAVIGVS…GANAHAVLDD (423 aa). Catalysis depends on for beta-ketoacyl synthase activity residues Cys-230, His-365, and His-403. Positions 608-929 are malonyl-CoA:ACP transacylase (MAT) domain; the sequence is TFIFTGQGAQ…FSAIKRKQDA (322 aa). Catalysis depends on Ser-699, which acts as the For malonyltransferase activity. Positions 994 to 1127 are N-terminal hotdog fold; sequence LELLGVRDPR…GLVSTSYKRE (134 aa). The PKS/mFAS DH domain occupies 994–1307; it reads LELLGVRDPR…TVPLRGASDP (314 aa). Residues 995–1302 are dehydratase (DH) domain; sequence ELLGVRDPRS…LEGCKTVPLR (308 aa). Residue His-1026 is the Proton acceptor; for dehydratase activity of the active site. The interval 1155–1307 is C-terminal hotdog fold; that stretch reads LPSVDPTVFY…TVPLRGASDP (153 aa). Catalysis depends on Asp-1220, which acts as the Proton donor; for dehydratase activity. The tract at residues 1713 to 2025 is enoyl reductase (ER) domain; sequence GLLDTLEYLS…SGGHVGKIVL (313 aa). A ketoreductase (KR) domain region spans residues 2049 to 2225; that stretch reads ATYVLIGGLG…AATSINLSLV (177 aa). A Carrier domain is found at 2328–2405; that stretch reads EVYEIVLQQL…GFAKKVMAKS (78 aa). Ser-2365 is modified (O-(pantetheine 4'-phosphoryl)serine).

It participates in mycotoxin biosynthesis. Reducing polyketide synthase; part of the gene cluster that mediates the biosynthesis of fusaric acid, a mycotoxin with low to moderate toxicity to animals and humans, but with high phytotoxic properties. L-aspartate is suggested as fusaric acid amino acid precursor that is activated and further processed to O-acetyl-L-homoserine by cluster enzymes aspartate kinase FUB3 and homoserine O-acetyltransferase FUB5, as well as enzymes of the primary metabolism. The polyketide synthase (PKS) FUB1 generates the triketide trans-2-hexenal which is presumptively released by the hydrolase FUB4 and linked to the NRPS-bound amino acid precursor by NAD(P)-dependent dehydrogenase FUB6. FUB1, FUB4, and the non-canonical NRPS Fub8 may form an enzyme complex. Further processing of the NRPS-bound intermediate might be carried out by FUB6 and the sulfhydrylase FUB7, enabling a spontaneous electrocyclization to close the carbon backbone of fusaric acid. Dihydrofusaric acid is likely to be released via reduction by the thioester reductase (TR) domain of FUB8 whereupon the final oxidation to fusaric acid may (also) be performed by the FMN-dependent dehydrogenase FUB9. This is Reducing polyketide synthase FUB1 from Gibberella moniliformis (strain M3125 / FGSC 7600) (Maize ear and stalk rot fungus).